A 400-amino-acid polypeptide reads, in one-letter code: MAKQKFERNKPHINIGTIGHVDHGKTTLTAAITKTMALRGRAEFRAFDQIDNAPEERARGITISISHVEYETENRHYAHVDCPGHADYIKNMITGAAQMDGAILVVSAPDGPMPQTREHILLAGQVEVPAMVVFLNKVDMMDDPELLELVEMELRELLTKYGFPGDEIPIVRGSAKGALDSASTDASQPEYQSIQELMQAVDDYIPTPERAIDKPFLMPIEDVFSIKGRGTVVTGRIERGIVKVGDTIEIIGMGPDVRTTAVTGVEMFKKLLDEGRAGDNVGALLRGIERTDVERGQVLAKPGSIKPHTKFKAEVYVLKKEEGGRHSPFFSGYRPQFYVRTTDVTGAIGLPEGVEMVMPGDNIQMTVELIVPVAIEQGLKFAIREGGRTVGAGIVPEIIA.

The tr-type G domain maps to 10–209 (KPHINIGTIG…AVDDYIPTPE (200 aa)). The segment at 19–26 (GHVDHGKT) is G1. 19 to 26 (GHVDHGKT) contributes to the GTP binding site. Residue Thr-26 participates in Mg(2+) binding. The segment at 60–64 (GITIS) is G2. Residues 81-84 (DCPG) are G3. GTP-binding positions include 81-85 (DCPGH) and 136-139 (NKVD). The tract at residues 136–139 (NKVD) is G4. Residues 174–176 (SAK) are G5.

It belongs to the TRAFAC class translation factor GTPase superfamily. Classic translation factor GTPase family. EF-Tu/EF-1A subfamily. Monomer.

Its subcellular location is the cytoplasm. It catalyses the reaction GTP + H2O = GDP + phosphate + H(+). GTP hydrolase that promotes the GTP-dependent binding of aminoacyl-tRNA to the A-site of ribosomes during protein biosynthesis. The chain is Elongation factor Tu from Herpetosiphon aurantiacus (Herpetosiphon giganteus).